The sequence spans 302 residues: Polyamine aminopropyltransferase (302 aa).

The PABS domain maps to 4–239 (WTWHLEWQTP…GLWGFIYASD (236 aa)). Gln33 is a binding site for S-methyl-5'-thioadenosine. Positions 64 and 88 each coordinate spermidine. S-methyl-5'-thioadenosine is bound by residues Asp108 and 140–141 (DG). The active-site Proton acceptor is Asp158. An S-methyl-5'-thioadenosine-binding site is contributed by Pro167.

Belongs to the spermidine/spermine synthase family. As to quaternary structure, homodimer or homotetramer.

Its subcellular location is the cytoplasm. The catalysed reaction is S-adenosyl 3-(methylsulfanyl)propylamine + putrescine = S-methyl-5'-thioadenosine + spermidine + H(+). It functions in the pathway amine and polyamine biosynthesis; spermidine biosynthesis; spermidine from putrescine: step 1/1. Functionally, catalyzes the irreversible transfer of a propylamine group from the amino donor S-adenosylmethioninamine (decarboxy-AdoMet) to putrescine (1,4-diaminobutane) to yield spermidine. This chain is Polyamine aminopropyltransferase, found in Sulfolobus acidocaldarius (strain ATCC 33909 / DSM 639 / JCM 8929 / NBRC 15157 / NCIMB 11770).